The chain runs to 33 residues: Photosystem II reaction center protein T (33 aa).

The helical transmembrane segment at 3-23 (ALVYTFLLVSTLGIIFFAIFF) threads the bilayer.

It belongs to the PsbT family. In terms of assembly, PSII is composed of 1 copy each of membrane proteins PsbA, PsbB, PsbC, PsbD, PsbE, PsbF, PsbH, PsbI, PsbJ, PsbK, PsbL, PsbM, PsbT, PsbY, PsbZ, Psb30/Ycf12, at least 3 peripheral proteins of the oxygen-evolving complex and a large number of cofactors. It forms dimeric complexes.

It localises to the plastid. It is found in the chloroplast thylakoid membrane. Functionally, found at the monomer-monomer interface of the photosystem II (PS II) dimer, plays a role in assembly and dimerization of PSII. PSII is a light-driven water plastoquinone oxidoreductase, using light energy to abstract electrons from H(2)O, generating a proton gradient subsequently used for ATP formation. This Asparagus officinalis (Garden asparagus) protein is Photosystem II reaction center protein T.